The following is a 251-amino-acid chain: uncharacterized protein (251 aa).

Residues 192-238 (CMMCVQRGDERVAITTPYTTDCGHTYCYACIMSRLKLVNNVSCPICK) form an RING-type zinc finger.

It is found in the cytoplasm. This is an uncharacterized protein from Schizosaccharomyces pombe (strain 972 / ATCC 24843) (Fission yeast).